A 218-amino-acid polypeptide reads, in one-letter code: Large ribosomal subunit protein uL4 (218 aa).

Residues 55–83 form a disordered region; that stretch reads THATKTRGMVSGGGKKPWKQKGTGRARQG.

Belongs to the universal ribosomal protein uL4 family. As to quaternary structure, part of the 50S ribosomal subunit.

One of the primary rRNA binding proteins, this protein initially binds near the 5'-end of the 23S rRNA. It is important during the early stages of 50S assembly. It makes multiple contacts with different domains of the 23S rRNA in the assembled 50S subunit and ribosome. In terms of biological role, forms part of the polypeptide exit tunnel. The protein is Large ribosomal subunit protein uL4 of Bifidobacterium longum (strain DJO10A).